Here is a 652-residue protein sequence, read N- to C-terminus: Bifunctional protein ThiO/ThiG (652 aa).

Residues 1–366 (MTRDIVIIGG…HYSRFQKQAS (366 aa)) are thiO. FAD is bound by residues 5 to 19 (IVII…AIAV) and 44 to 46 (AGM). Glu52 contributes to the glycine binding site. Val173 provides a ligand contact to FAD. 2 residues coordinate glycine: Arg301 and Arg327. 325-331 (HYRNGIL) serves as a coordination point for FAD. Residues 393–652 (SLIIAGKSFH…ASSPVTGTIS (260 aa)) are thiG. Lys494 functions as the Schiff-base intermediate with DXP in the catalytic mechanism. Residues Gly555, 581-582 (AG), and 603-604 (NS) contribute to the 1-deoxy-D-xylulose 5-phosphate site.

The protein in the N-terminal section; belongs to the DAO family. ThiO subfamily. In the C-terminal section; belongs to the ThiG family. In terms of assembly, interacts with ThiH and ThiS. It depends on FAD as a cofactor.

The protein resides in the cytoplasm. It catalyses the reaction glycine + O2 + H2O = glyoxylate + H2O2 + NH4(+). The enzyme catalyses [ThiS sulfur-carrier protein]-C-terminal-Gly-aminoethanethioate + 2-iminoacetate + 1-deoxy-D-xylulose 5-phosphate = [ThiS sulfur-carrier protein]-C-terminal Gly-Gly + 2-[(2R,5Z)-2-carboxy-4-methylthiazol-5(2H)-ylidene]ethyl phosphate + 2 H2O + H(+). It functions in the pathway cofactor biosynthesis; thiamine diphosphate biosynthesis. Functionally, catalyzes the FAD-dependent oxidative deamination of glycine. Is essential for thiamine biosynthesis since the oxidation of glycine catalyzed by ThiO generates the glycine imine intermediate (dehydroglycine) required for the biosynthesis of the thiazole ring of thiamine pyrophosphate. In terms of biological role, catalyzes the rearrangement of 1-deoxy-D-xylulose 5-phosphate (DXP) to produce the thiazole phosphate moiety of thiamine. Sulfur is provided by the thiocarboxylate moiety of the carrier protein ThiS. In vitro, sulfur can be provided by H(2)S. The polypeptide is Bifunctional protein ThiO/ThiG (thiO/thiG) (Trichormus variabilis (strain ATCC 29413 / PCC 7937) (Anabaena variabilis)).